Consider the following 316-residue polypeptide: tRNA methyltransferase 10 homolog B (316 aa).

Disordered stretches follow at residues 1–30 (MDCEWEGRPQRAGSRASQDPEGLPEARDDG) and 42–98 (VEYD…DLGN). Basic residues predominate over residues 63-82 (VQRKQRHWERIVSSKKSKRK). Positions 75 to 96 (SSKKSKRKQERERRKIKRAEDL) form a coiled coil. Basic and acidic residues predominate over residues 83-95 (QERERRKIKRAED). The region spanning 113–310 (TKEKLLEAKH…KGVSPGKGYI (198 aa)) is the SAM-dependent MTase TRM10-type domain.

Belongs to the class IV-like SAM-binding methyltransferase superfamily. TRM10 family.

The enzyme catalyses guanosine(9) in tRNA + S-adenosyl-L-methionine = N(1)-methylguanosine(9) in tRNA + S-adenosyl-L-homocysteine + H(+). Its function is as follows. S-adenosyl-L-methionine-dependent guanine N(1)-methyltransferase that catalyzes the formation of N(1)-methylguanine at position 9 (m1G9) in tRNAs. Probably not able to catalyze formation of N(1)-methyladenine at position 9 (m1A9) in tRNAs. The sequence is that of tRNA methyltransferase 10 homolog B (Trmt10b) from Rattus norvegicus (Rat).